A 326-amino-acid polypeptide reads, in one-letter code: Undecaprenyl-phosphate 4-deoxy-4-formamido-L-arabinose transferase (326 aa).

2 consecutive transmembrane segments (helical) span residues 234-254 (LLSIVGSVVAGIGFTFSILLI) and 269-289 (VFTLFAILFTFVGVQLLGMGL).

This sequence belongs to the glycosyltransferase 2 family.

The protein resides in the cell inner membrane. It carries out the reaction UDP-4-deoxy-4-formamido-beta-L-arabinose + di-trans,octa-cis-undecaprenyl phosphate = 4-deoxy-4-formamido-alpha-L-arabinopyranosyl di-trans,octa-cis-undecaprenyl phosphate + UDP. It participates in glycolipid biosynthesis; 4-amino-4-deoxy-alpha-L-arabinose undecaprenyl phosphate biosynthesis; 4-amino-4-deoxy-alpha-L-arabinose undecaprenyl phosphate from UDP-4-deoxy-4-formamido-beta-L-arabinose and undecaprenyl phosphate: step 1/2. Its pathway is bacterial outer membrane biogenesis; lipopolysaccharide biosynthesis. Catalyzes the transfer of 4-deoxy-4-formamido-L-arabinose from UDP to undecaprenyl phosphate. The modified arabinose is attached to lipid A and is required for resistance to polymyxin and cationic antimicrobial peptides. The chain is Undecaprenyl-phosphate 4-deoxy-4-formamido-L-arabinose transferase from Aeromonas hydrophila subsp. hydrophila (strain ATCC 7966 / DSM 30187 / BCRC 13018 / CCUG 14551 / JCM 1027 / KCTC 2358 / NCIMB 9240 / NCTC 8049).